Here is a 492-residue protein sequence, read N- to C-terminus: Cytochrome P450 monooxygenase ATEG_03631 (492 aa).

A helical membrane pass occupies residues 10–30 (FATLNPMVVVAIPVFLFVISL). An N-linked (GlcNAc...) asparagine glycan is attached at asparagine 309. A heme-binding site is contributed by cysteine 457.

It belongs to the cytochrome P450 family. Heme is required as a cofactor.

The protein localises to the membrane. Its pathway is secondary metabolite biosynthesis. In terms of biological role, cytochrome P450 monooxygenase; part of the cluster A that mediates the biosynthesis of azasperpyranones, members of the azaphilone family that exhibit anti-cancer activities. Azasperpyranones are synthesized by 2 clusters, A and B. Cluster A is responsible for the production of the polyhydric phenol moiety while the azaphilonoid scaffold is produced by the cluster B. The non-reducing polyketide synthase ATEG_03629 produces 5-methyl orsellinic acid, which is then reduced to 5-methyl orsellinic aldehyde by the NRPS-like protein ATEG_03630. 5-methyl orsellinic aldehyde is then first hydroxylated by the FAD-dependent monooxygenase ATEG_03635 and subsequently hydroxylated by the cytochrome P450 monooxygenase ATEG_03631 to produce the unstable polyhydric phenol precursor of azasperpyranones. On the other hand, the polyketide synthase ATEG_07659 is responsible for producing the 3,5-dimethyloctadienone moiety from acetyl-CoA, three malonyl-CoA, and two S-adenosyl methionines (SAM). The 3,5-dimethyloctadienone moiety is then loaded onto the SAT domain of ATEG_07661 and extended with four malonyl-CoA and one SAM, which leads to the formation of 2,4-dihydroxy-6-(5,7-dimethyl-2-oxo-trans-3-trans-5-nonadienyl)-3-methylbenzaldehyde (compound 8) after reductive release and aldol condensation. The FAD-dependent monooxygenase ATEG_07662 is the next enzyme in the biosynthesis sequence and hydroxylates the side chain at the benzylic position of compound 8. In Aspergillus nidulans, afoF, the ortholog of the FAD-dependent oxygenase ATEG_07660, is the key enzyme for the biosynthesis of asperfuranone by catalyzing the hydroxylation at C-8 of to prevent the formation of a six-membered ring hemiacetal intermediate and thus facilitating the formation of a five-membered ring to produce asperfuranone. In Aspergillus terreus, ATEG_07660 is probably not functional, which leads to the formation of the six-membered ring hemiacetal intermediate presperpyranone instead of asperfuranone. Finally, ATEG_03636 is involved in the condensation of the polyhydric phenol moiety produced by cluster A and the perasperpyranone precursor produced by cluster B, to yield azasperpyranone A. Further modifications of azasperpyranone A result in the production of derivatives, including azasperpyranone B to F. This Aspergillus terreus (strain NIH 2624 / FGSC A1156) protein is Cytochrome P450 monooxygenase ATEG_03631.